The sequence spans 160 residues: Troponin C, isoform 2 (160 aa).

4 EF-hand domains span residues 15–50 (DQIEQFRKYFNMFDKEGKGYIRATQVGQILRTMGQA), 51–86 (FEERDLKQLIKEFDADGSGEIEFEEFAAMVANFVVN), 92–127 (GLEEELREAFRLYDKEGNGYINVSDLRDILRALDDN), and 128–160 (VSEEELDEMIAEIDADGSGTVDFDEFMEMMSGE). Ca(2+) is bound by residues aspartate 64, aspartate 66, serine 68, glutamate 70, and glutamate 75. Ca(2+) is bound by residues aspartate 141, aspartate 143, serine 145, threonine 147, and glutamate 152.

The protein belongs to the troponin C family. Pharyngeal muscle.

This Caenorhabditis elegans protein is Troponin C, isoform 2 (tnc-2).